A 548-amino-acid chain; its full sequence is MDSQRNLLVIALLFVSFMIWQAWEQDKNPQPQAQQTTQTTTTAAGSAADQGVPASGQGKLISVKTDVLDLTINTRGGDVEQALLPAYPKELNSTQPFQLLETSSQFIYQAQSGLTGRDGPDNPANGPRPLYNVEKDAYVLAEGQNELQVPMTYTDAAGNTFTKTFVLKRGDYAVNVNYNVQNAGEKPLEISTFGQLKQSITLPPHLDTGSSNFALHTFRGAAYSTPDEKYEKYKFDTIADNENLNISSKGGWVAMLQQYFATAWIPHNDGTNNFYTANLGNGIAAIGYKSQPVLVQPGQTGAMNSTLWVGPEIQDKMAAVAPHLDLTVDYGWLWFISQPLFKLLKWIHSFVGNWGFSIIIITFIVRGIMYPLTKAQYTSMAKMRMLQPKIQAMRERLGDDKQRISQEMMALYKAEKVNPLGGCFPLLIQMPIFLALYYMLMGSVELRQAPFALWIHDLSAQDPYYILPILMGVTMFFIQKMSPTTVTDPMQQKIMTFMPVIFTVFFLWFPSGLVLYYIVSNLVTIIQQQLIYRGLEKRGLHSREKKKS.

A helical membrane pass occupies residues 6 to 26 (NLLVIALLFVSFMIWQAWEQD). Residues 28–55 (NPQPQAQQTTQTTTTAAGSAADQGVPAS) form a disordered region. A compositionally biased stretch (low complexity) spans 30–50 (QPQAQQTTQTTTTAAGSAADQ). A run of 4 helical transmembrane segments spans residues 350 to 370 (FVGN…GIMY), 420 to 440 (LGGC…YYML), 458 to 478 (LSAQ…MFFI), and 499 to 519 (PVIF…YYIV).

It belongs to the OXA1/ALB3/YidC family. Type 1 subfamily. In terms of assembly, interacts with the Sec translocase complex via SecD. Specifically interacts with transmembrane segments of nascent integral membrane proteins during membrane integration.

Its subcellular location is the cell inner membrane. In terms of biological role, required for the insertion and/or proper folding and/or complex formation of integral membrane proteins into the membrane. Involved in integration of membrane proteins that insert both dependently and independently of the Sec translocase complex, as well as at least some lipoproteins. Aids folding of multispanning membrane proteins. The protein is Membrane protein insertase YidC of Escherichia coli O139:H28 (strain E24377A / ETEC).